The following is a 574-amino-acid chain: Protein SIX6OS1 (574 aa).

The disordered stretch occupies residues 259–313 (KDEQVSNRSSQNSQLLLPCESQKFVRNMNSSEARVTDKKEESSANQSKFVRSDVR). A compositionally biased stretch (low complexity) spans 264-275 (SNRSSQNSQLLL). Thr-427 is modified (phosphothreonine). Ser-430 carries the post-translational modification Phosphoserine. The tract at residues 549-574 (QDPSTMTSSSSKDFSSSQNKTQFMFF) is disordered. Over residues 552-565 (STMTSSSSKDFSSS) the composition is skewed to low complexity.

Interacts with SYCE1. Interacts with proteasome subunit PSMA8; to participate in meiosis progression during spermatogenesis. In terms of tissue distribution, most abundantly expressed in testis. Also expressed in retina and skeletal muscle.

The protein localises to the chromosome. Functionally, meiotic protein that localizes to the central element of the synaptonemal complex and is required for chromosome synapsis during meiotic recombination. Required for the appropriate processing of intermediate recombination nodules before crossover formation. The protein is Protein SIX6OS1 (Six6os1) of Mus musculus (Mouse).